The following is a 907-amino-acid chain: MEIHPSLVVEPSYPDLIIHAGEVTLGEKDRNKMDSKKKRLEKARITEAACALLNSGGGVIVMQMSNKSEHPVEMGLDLETSLRELIPSSDLQAFIETKQQGDLFYIFVKSWSCSPKDGSTKPRICSLSSSLYCRSLTSKLPLDSKETFEFLERKKTCVKGSLTDGKGPPAKIPRLMYQNDLESNPAFEIFQSERLEYGQRLPFSESASIEFKQFSTRRAHEYIKSVIPEYISAFANTQGGYLLFGVDDESKRVLGCPKDNVDRDSLKAVVNEAISKLPVFHFCSSKEKVSYKTRVIDVFKEGNLYGYLCVIKVERFCCAVFSEAPISWMADKENGVYSLNTEKWVRMMVDIGPEAASSKQSSLDDLSKDFECQLSLSNSPPHCRPVYSKKGLEHKGDLQKRLFQVSADCFKYTPESLWRELCSQHERLENLISQQMCSFSCGLLILSRSWAVDLNLEGKQGVICDALLIAENSPPTLYTILEEQDELGQDYCTRTAFTLKQKLVNTGGYTGRVCVMTKVLCLSSQNNIETNGNSVSLIDYPRSYNLANIQEMEDLLQALVIVLLNFSSFLSDQLGCEILNLLTVQQYEILSKSLHKTRKLFVHGMPGSGKTIIAMKIMEKIKNTFHCERDSILYICENQLLRDFIRAKNVCRAVTRKTFMTPNFEVEKIQHIIVDEAQNFRTENGDWYMKAKRITQRMKTCPQIFWIFLDYFQTSHQKESGLPDFLHQYPKEELTKVVRNADKIAEFLQKISEKIRSNPPPIIPRESLNMVCEFNWSQGVSGTCKLLTSLGLEQMARYVAERCYFFLKNGYSAQDIAVLFSTEDEKDNNEDMFLREIRNRTSQIDDAYHLYMFDSIRRFSGLERSIVFGIDPRTAEKSIFHNLMLCLASRARKHLYILSKVPNPFNF.

Residues 1–353 (MEIHPSLVVE…WVRMMVDIGP (353 aa)) form a n'-domain region region. Active-site residues include glutamate 205 and glutamate 210. Zn(2+) is bound by residues histidine 281, cysteine 283, and cysteine 318. 604–611 (GMPGSGKT) lines the ATP pocket.

It belongs to the Schlafen family. Subgroup III subfamily. Mg(2+) serves as cofactor.

The protein localises to the cytoplasm. Its function is as follows. Endoribonuclease that cleaves tRNAs and rRNAs. Cleaves tRNAs 11 nucleotides from the 3'-terminus at the acceptor stem. Does not act on tRNA(Sec). This Rattus norvegicus (Rat) protein is Schlafen family member 13.